The chain runs to 571 residues: MSEIKNEPMSNSDSVASSNSAKMRRKKTNRACNHCHKAHMTCDTNRPCQRCLQRGLESSCQDAPRKRKKYLADVPPNVLSRHDGLSQSPPYEMGKNDTINYQSGPFQERPPSSEFNPPMPTANTDNDINQDFGAFGVYPNSHLFPSNTNQTNQDAGADMSHSQGQSKPPINQHMHQQGLPSYNKPRRTNFLSSAADLEYSTLSSILQDNFVHVNNNTSAEGTPNSLNLSPSVLPNNAPNTNITDSRNTTSSNSLNNYGQQNKPMNYTSGSSHASSPNDSIFNSKQMSSINGINKNKYYYSSKYPKCDESINQYFLGPTGSDHELIYPDVITAIEEMKALDPAVYHERNSKSSLSFTIGIIPESNEYTKGRKPQENKETFKEPDEIYAKVNKPFSYTPGYHSLIAYLRKRFPKEMLVKMAESIAAYRPSFIACTNSLKESDLIFMEQCFQRTLLTYDNFIRVSGTPTIVWRRTGEIAYVGNEFCVLTGWKKEDLLLNTKKFIVELLDDKSVVEYFQLFSKIAFGDFLGATMTECTLLTPKKDVKIRTGCMWTLKRDVFGIPMMIIGNFLPII.

4 disordered regions span residues 1–25 (MSEI…KMRR), 76–117 (PNVL…EFNP), 141–187 (SHLF…KPRR), and 216–282 (NTSA…SIFN). Residues 10-21 (SNSDSVASSNSA) are compositionally biased toward low complexity. Residues 20–48 (SAKMRRKKTNRACNHCHKAHMTCDTNRPC) constitute a DNA-binding region (zn(2)-C6 fungal-type). Polar residues-rich tracts occupy residues 143–180 (LFPS…QGLP) and 216–238 (NTSA…NNAP). Low complexity predominate over residues 239–256 (NTNITDSRNTTSSNSLNN). Over residues 257–282 (YGQQNKPMNYTSGSSHASSPNDSIFN) the composition is skewed to polar residues. The region spanning 403–475 (IAYLRKRFPK…TIVWRRTGEI (73 aa)) is the PAS domain.

Belongs to the ERT1/acuK family.

The protein resides in the nucleus. In terms of biological role, transcription factor which regulates nonfermentable carbon utilization. Activator of gluconeogenetic genes. The chain is Transcription activator of gluconeogenesis ERT1 (ERT1) from Debaryomyces hansenii (strain ATCC 36239 / CBS 767 / BCRC 21394 / JCM 1990 / NBRC 0083 / IGC 2968) (Yeast).